The sequence spans 193 residues: Protein hunchback (193 aa).

Disordered stretches follow at residues Ser16–Thr126 and Ser146–Ala193. Residues His17 to His31 are compositionally biased toward basic residues. Low complexity-rich tracts occupy residues Ser35 to Gln46 and Ser56 to Gln77. A compositionally biased stretch (polar residues) spans Pro89–Arg99. The span at Glu174–Ala193 shows a compositional bias: basic and acidic residues.

This sequence belongs to the hunchback C2H2-type zinc-finger protein family.

The protein localises to the nucleus. Functionally, gap class segmentation protein that controls development of head structures. In Drosophila iki (Fruit fly), this protein is Protein hunchback (hb).